The chain runs to 495 residues: Putative aldehyde dehydrogenase AldA (495 aa).

An NAD(+)-binding site is contributed by 212-218 (GKGSESG). Active-site residues include E256 and C290.

This sequence belongs to the aldehyde dehydrogenase family.

The enzyme catalyses an aldehyde + NAD(+) + H2O = a carboxylate + NADH + 2 H(+). The sequence is that of Putative aldehyde dehydrogenase AldA (aldA) from Staphylococcus aureus (strain MSSA476).